The sequence spans 343 residues: MWSHLNRLLFWSIFSSVTCRKAVLDCEAMKTNEFPSPCLDSKTKVVMKGQNVSMFCSHKNKSLQITYSLFRRKTHLGTQDGKGEPAIFNLSITEAHESGPYKCKAQVTSCSKYSRDFSFTIVDPVTSPVLNIMVIQTETDRHITLHCLSVNGSLPINYTFFENHVAISPAISKYDREPAEFNLTKKNPGEEEEYRCEAKNRLPNYATYSHPVTMPSTGGDSCPFCLKLLLPGLLLLLVVIILILAFWVLPKYKTRKAMRNNVPRDRGDTAMEVGIYANILEKQAKEESVPEVGSRPCVSTAQDEAKHSQELQYATPVFQEVAPREQEACDSYKSGYVYSELNF.

The N-terminal stretch at 1–19 (MWSHLNRLLFWSIFSSVTC) is a signal peptide. The Extracellular segment spans residues 20-227 (RKAVLDCEAM…GGDSCPFCLK (208 aa)). Ig-like C2-type domains are found at residues 35-118 (PSPC…RDFS) and 128-213 (PVLN…HPVT). 6 N-linked (GlcNAc...) asparagine glycosylation sites follow: asparagine 51, asparagine 60, asparagine 89, asparagine 151, asparagine 157, and asparagine 182. Intrachain disulfides connect cysteine 56/cysteine 103 and cysteine 147/cysteine 196. The chain crosses the membrane as a helical span at residues 228-248 (LLLPGLLLLLVVIILILAFWV). Over 249–343 (LPKYKTRKAM…SGYVYSELNF (95 aa)) the chain is Cytoplasmic. 2 short sequence motifs (ITIM motif) span residues 311–316 (LQYATP) and 336–341 (YVYSEL). Phosphotyrosine occurs at positions 313 and 338.

Monomer. Interacts (tyrosine-phosphorylated) with PTPN6, PTPN11 and INPP5D. N-glycosylated. As to expression, expressed in myeloid cells (dendritic cells, macrophages and neutrophils, weak expression on B-cells but not in T-cells or natural killer cells), peripheral blood basophils and mast cells (at protein level).

The protein localises to the cell membrane. Its function is as follows. Immunoglobulin-like receptor which plays an inhibitory role in degranulation of mast cells. Negatively regulates IgE-mediated mast cell activation and suppresses the type I immediate hypersensitivity reaction. In Homo sapiens (Human), this protein is Allergin-1 (MILR1).